Reading from the N-terminus, the 486-residue chain is uncharacterized protein (486 aa).

A helical transmembrane segment spans residues 7–28; that stretch reads HVISIFETVGAYFINIFYNFLY. N-linked (GlcNAc...) asparagine; by host glycosylation is found at asparagine 73, asparagine 83, and asparagine 195. The stretch at 183-233 forms a coiled coil; it reads ELEETYARLSSYNRSLLYQIEELTSEKKSFLEELSTLRKKYEKRQSEYRRL. Residues 299-329 form a disordered region; that stretch reads SQEVTSKSPNNYPVPQSRTIVNKPSDNYPVP. Positions 300–323 are enriched in polar residues; that stretch reads QEVTSKSPNNYPVPQSRTIVNKPS. A glycan (N-linked (GlcNAc...) asparagine; by host) is linked at asparagine 461.

This sequence belongs to the asfivirus B475L family.

Its subcellular location is the host membrane. This is an uncharacterized protein from Ornithodoros (relapsing fever ticks).